We begin with the raw amino-acid sequence, 208 residues long: Imidazole glycerol phosphate synthase subunit HisH (208 aa).

Positions 2–208 (NVTIVDYNSG…LKIIENFLNL (207 aa)) constitute a Glutamine amidotransferase type-1 domain. Cys85 serves as the catalytic Nucleophile. Active-site residues include His190 and Glu192.

As to quaternary structure, heterodimer of HisH and HisF.

It is found in the cytoplasm. It carries out the reaction 5-[(5-phospho-1-deoxy-D-ribulos-1-ylimino)methylamino]-1-(5-phospho-beta-D-ribosyl)imidazole-4-carboxamide + L-glutamine = D-erythro-1-(imidazol-4-yl)glycerol 3-phosphate + 5-amino-1-(5-phospho-beta-D-ribosyl)imidazole-4-carboxamide + L-glutamate + H(+). The catalysed reaction is L-glutamine + H2O = L-glutamate + NH4(+). It functions in the pathway amino-acid biosynthesis; L-histidine biosynthesis; L-histidine from 5-phospho-alpha-D-ribose 1-diphosphate: step 5/9. Functionally, IGPS catalyzes the conversion of PRFAR and glutamine to IGP, AICAR and glutamate. The HisH subunit catalyzes the hydrolysis of glutamine to glutamate and ammonia as part of the synthesis of IGP and AICAR. The resulting ammonia molecule is channeled to the active site of HisF. In Pelagibacter ubique (strain HTCC1062), this protein is Imidazole glycerol phosphate synthase subunit HisH.